The sequence spans 346 residues: Putative isoaspartyl peptidase/L-asparaginase (346 aa).

Residue threonine 207 is the Nucleophile of the active site. Substrate contacts are provided by residues 235–238 (RVGD) and 257–260 (TGTG).

This sequence belongs to the Ntn-hydrolases family. In terms of assembly, heterodimer of an alpha and beta chain produced by autocleavage. In terms of processing, cleaved into an alpha and beta chain by autocatalysis; this activates the enzyme. The N-terminal residue of the beta subunit is responsible for the nucleophile hydrolase activity.

It carries out the reaction Cleavage of a beta-linked Asp residue from the N-terminus of a polypeptide.. The catalysed reaction is L-asparagine + H2O = L-aspartate + NH4(+). In terms of biological role, has both L-asparaginase and beta-aspartyl peptidase activity. Does not have aspartylglucosaminidase activity and is inactive toward GlcNAc-L-Asn. Likewise, has no activity toward glutamine. The sequence is that of Putative isoaspartyl peptidase/L-asparaginase from Dictyostelium discoideum (Social amoeba).